We begin with the raw amino-acid sequence, 675 residues long: Alpha-1,4-glucan:maltose-1-phosphate maltosyltransferase (675 aa).

Alpha-maltose 1-phosphate is bound by residues Lys-256, Gln-316, and Asp-351. The active-site Nucleophile is Asp-386. Asn-387 provides a ligand contact to alpha-maltose 1-phosphate. Residue Glu-415 is the Proton donor of the active site. 525–526 (KY) serves as a coordination point for alpha-maltose 1-phosphate.

This sequence belongs to the glycosyl hydrolase 13 family. GlgE subfamily. In terms of assembly, homodimer.

It catalyses the reaction alpha-maltose 1-phosphate + [(1-&gt;4)-alpha-D-glucosyl](n) = [(1-&gt;4)-alpha-D-glucosyl](n+2) + phosphate. Its function is as follows. Maltosyltransferase that uses maltose 1-phosphate (M1P) as the sugar donor to elongate linear or branched alpha-(1-&gt;4)-glucans. Is involved in a branched alpha-glucan biosynthetic pathway from trehalose, together with TreS, Mak and GlgB. In Corynebacterium glutamicum (strain ATCC 13032 / DSM 20300 / JCM 1318 / BCRC 11384 / CCUG 27702 / LMG 3730 / NBRC 12168 / NCIMB 10025 / NRRL B-2784 / 534), this protein is Alpha-1,4-glucan:maltose-1-phosphate maltosyltransferase.